Reading from the N-terminus, the 244-residue chain is Lipoprotein-releasing system ATP-binding protein LolD (244 aa).

The region spanning 19–244 (IRAEALAKTY…KLRELAPSAV (226 aa)) is the ABC transporter domain. 55–62 (GASGAGKS) contributes to the ATP binding site.

It belongs to the ABC transporter superfamily. Lipoprotein translocase (TC 3.A.1.125) family. In terms of assembly, the complex is composed of two ATP-binding proteins (LolD) and two transmembrane proteins (LolC and LolE).

The protein localises to the cell inner membrane. Its function is as follows. Part of the ABC transporter complex LolCDE involved in the translocation of mature outer membrane-directed lipoproteins, from the inner membrane to the periplasmic chaperone, LolA. Responsible for the formation of the LolA-lipoprotein complex in an ATP-dependent manner. In Xanthomonas oryzae pv. oryzae (strain MAFF 311018), this protein is Lipoprotein-releasing system ATP-binding protein LolD.